The sequence spans 457 residues: MDHLPIFCQLRDRDCLIVGGGDVAERKARLLLEAGARLTVNALTFIPQFTVWANEGMLTLVEGPFDETLLDSCWLAIAATDDDTVNQRVSEAAESRRIFCNVVDAPKAASFIMPSIIDRSPLMVAVSSGGTSPVLARLLREKLESLLPQHLGQVARYAGQLRARVKKQFATMGERRRFWEKFFVNDRLAQSLANADEKAVNATTEHLFSEPLDHRGEVVLVGAGPGDAGLLTLKGLQQIQQADIVVYDRLVSDDIMNLVRRDADRVFVGKRAGYHCVPQEEINQILLREAQKGKRVVRLKGGDPFIFGRGGEELETLCHAGIPFSVVPGITAASGCSAYSGIPLTHRDYAQSVRLVTGHLKTGGELDWENLAAEKQTLVFYMGLNQAATIQDKLIAFGMQADMPVALVENGTSVKQRVVHGVLTQLGELAQQVESPALIIVGRVVGLRDKLNWFSNH.

The tract at residues 1–204 (MDHLPIFCQL…ADEKAVNATT (204 aa)) is precorrin-2 dehydrogenase /sirohydrochlorin ferrochelatase. Residues 22-23 (DV) and 43-44 (LT) each bind NAD(+). The residue at position 128 (Ser128) is a Phosphoserine. Residues 216 to 457 (GEVVLVGAGP…RDKLNWFSNH (242 aa)) are uroporphyrinogen-III C-methyltransferase. Pro225 is an S-adenosyl-L-methionine binding site. Residue Asp248 is the Proton acceptor of the active site. The active-site Proton donor is the Lys270. Residues 301-303 (GGD), Ile306, 331-332 (TA), Met382, and Gly411 each bind S-adenosyl-L-methionine.

The protein in the N-terminal section; belongs to the precorrin-2 dehydrogenase / sirohydrochlorin ferrochelatase family. It in the C-terminal section; belongs to the precorrin methyltransferase family.

The catalysed reaction is uroporphyrinogen III + 2 S-adenosyl-L-methionine = precorrin-2 + 2 S-adenosyl-L-homocysteine + H(+). It carries out the reaction precorrin-2 + NAD(+) = sirohydrochlorin + NADH + 2 H(+). It catalyses the reaction siroheme + 2 H(+) = sirohydrochlorin + Fe(2+). It participates in cofactor biosynthesis; adenosylcobalamin biosynthesis; precorrin-2 from uroporphyrinogen III: step 1/1. It functions in the pathway cofactor biosynthesis; adenosylcobalamin biosynthesis; sirohydrochlorin from precorrin-2: step 1/1. The protein operates within porphyrin-containing compound metabolism; siroheme biosynthesis; precorrin-2 from uroporphyrinogen III: step 1/1. Its pathway is porphyrin-containing compound metabolism; siroheme biosynthesis; siroheme from sirohydrochlorin: step 1/1. It participates in porphyrin-containing compound metabolism; siroheme biosynthesis; sirohydrochlorin from precorrin-2: step 1/1. Multifunctional enzyme that catalyzes the SAM-dependent methylations of uroporphyrinogen III at position C-2 and C-7 to form precorrin-2 via precorrin-1. Then it catalyzes the NAD-dependent ring dehydrogenation of precorrin-2 to yield sirohydrochlorin. Finally, it catalyzes the ferrochelation of sirohydrochlorin to yield siroheme. The polypeptide is Siroheme synthase (Salmonella schwarzengrund (strain CVM19633)).